A 422-amino-acid polypeptide reads, in one-letter code: Adenosylhomocysteinase (422 aa).

The substrate site is built by aspartate 129 and glutamate 154. NAD(+) is bound at residue 155-157 (TTT). Residues lysine 184 and aspartate 188 each coordinate substrate. Residues asparagine 189, 218 to 223 (GYGWCG), glutamate 241, asparagine 276, 297 to 299 (AGH), and asparagine 344 each bind NAD(+).

Belongs to the adenosylhomocysteinase family. The cofactor is NAD(+).

It is found in the cytoplasm. The catalysed reaction is S-adenosyl-L-homocysteine + H2O = L-homocysteine + adenosine. The protein operates within amino-acid biosynthesis; L-homocysteine biosynthesis; L-homocysteine from S-adenosyl-L-homocysteine: step 1/1. Functionally, may play a key role in the regulation of the intracellular concentration of adenosylhomocysteine. This Pyrococcus abyssi (strain GE5 / Orsay) protein is Adenosylhomocysteinase.